A 723-amino-acid polypeptide reads, in one-letter code: Dipeptidyl aminopeptidase BI (723 aa).

The first 23 residues, 1–23 (MKPTSLLLAATVLMSTPITSALA), serve as a signal peptide directing secretion. Residues S574, D659, and H694 each act as charge relay system in the active site.

This sequence belongs to the peptidase S9A family. Monomer.

With respect to regulation, nearly completely inhibited by 0.5 mM ZnCl(2), 0.1 mM N-tosyl-L-lysyl chloromethyl ketone (TLCK) and 0.1 mM leupeptin. Strongly inhibited by 0.5 mM CoCl(2) and 0.1 mM chymostatin. Activity is hardly affected by general serine protease inhibitors phenylmethanesulfonyl fluoride (PMSF), diisopropyl fluorophosphate (DFP) and N-tosyl-L-phenyl-alanyl chloromethyl ketone (TPCK) or by aspartyl protease inhibitor pepstatin A or by CaCl(2) and EDTA. Cysteine protease inhibitors, such as N-ethylmaleimide (NEM), iodoacetic acid and L-trans-epoxysuccinyl-leucylamido(4-guanido)butane (E-64) have no effect on activity. In terms of biological role, sequentially removes dipeptide units (NH3-P2-P1-) from the amino termini of peptides and proteins. Is able to catalyze the removal of Asp-Arg from the amino termini of angiotensins I and II. Has slight endopeptidase activity on N-terminally blocked peptide derivatives which contain arginine residues at the P1 position. Does not hydrolyze Ala-Ala-Ala and Ala-Ala-Ala-Ala substrates or insulin beta chain. This Pseudoxanthomonas mexicana protein is Dipeptidyl aminopeptidase BI.